The sequence spans 142 residues: MNRTMFKSKIHRATVTHADLHYVGSVTVDLDLLEAADILPGELVAIVDVTNGARLETYTIAGERGSGVIGINGAAAHLMHENDIVILITYAEMTTEEAKAYTPKVVHVDKDNKIVQIGNDPAEGHTRGLMRPPFALNNSALN.

Ser25 (schiff-base intermediate with substrate; via pyruvic acid) is an active-site residue. Ser25 is subject to Pyruvic acid (Ser). Thr57 contributes to the substrate binding site. Tyr58 acts as the Proton donor in catalysis. 73-75 is a substrate binding site; that stretch reads GAA.

The protein belongs to the PanD family. As to quaternary structure, heterooctamer of four alpha and four beta subunits. Pyruvate is required as a cofactor. Is synthesized initially as an inactive proenzyme, which is activated by self-cleavage at a specific serine bond to produce a beta-subunit with a hydroxyl group at its C-terminus and an alpha-subunit with a pyruvoyl group at its N-terminus.

The protein localises to the cytoplasm. The enzyme catalyses L-aspartate + H(+) = beta-alanine + CO2. It participates in cofactor biosynthesis; (R)-pantothenate biosynthesis; beta-alanine from L-aspartate: step 1/1. Its function is as follows. Catalyzes the pyruvoyl-dependent decarboxylation of aspartate to produce beta-alanine. This Arthrobacter sp. (strain FB24) protein is Aspartate 1-decarboxylase.